The following is a 94-amino-acid chain: Progonadoliberin-1 (94 aa).

A signal peptide spans 1-22; that stretch reads MAAKILALWLLLAGTVFPQGCC. Gln-23 is subject to Pyrrolidone carboxylic acid. Gly-32 is modified (glycine amide).

It belongs to the GnRH family. Synthesized in preoptic neurons and is transported to the pituitary in the preoptic-hypophyseal axons.

It localises to the secreted. Its function is as follows. Stimulates the secretion of gonadotropins. May be responsible for the regulation of the hypothalamic-pituitary-gonadal axis. In Haplochromis burtoni (Burton's mouthbrooder), this protein is Progonadoliberin-1 (gnrh1).